We begin with the raw amino-acid sequence, 355 residues long: Anthocyanin synthase (355 aa).

Residues Y145 and K216 each coordinate substrate. One can recognise a Fe2OG dioxygenase domain in the interval 211–310 (LLLQMKINYY…RISWAVFCEP (100 aa)). Residue 218–220 (NYY) participates in 2-oxoglutarate binding. Fe cation is bound at residue H235. T236 provides a ligand contact to substrate. Residues D237 and H291 each contribute to the Fe cation site. Residues R301 and 301–303 (RIS) contribute to the 2-oxoglutarate site. E309 and K344 together coordinate substrate.

Belongs to the iron/ascorbate-dependent oxidoreductase family. Requires L-ascorbate as cofactor. It depends on Fe(2+) as a cofactor. In terms of tissue distribution, expressed in stems and leaves. Expressed at low levels in ovaries.

The enzyme catalyses a (2R,3S,4S)-leucoanthocyanidin + 2-oxoglutarate + O2 = a 4-H-anthocyanidin with a 3-hydroxy group + succinate + CO2 + 2 H2O. It functions in the pathway pigment biosynthesis; anthocyanin biosynthesis. Involved in anthocyanin biosynthesis by catalyzing the oxidation of leucoanthocyanidins into anthocyanidins. Required for the accumulation of anthocyanin in red-fleshed kiwifruit varieties. The sequence is that of Anthocyanin synthase from Actinidia chinensis var. chinensis (Chinese soft-hair kiwi).